We begin with the raw amino-acid sequence, 724 residues long: Catalase-peroxidase (724 aa).

The disordered stretch occupies residues 1–26; it reads MDENKTKPTGKCPVMHGGNTSTGSSN. Residues 98–225 constitute a cross-link (tryptophyl-tyrosyl-methioninium (Trp-Tyr) (with M-251)); sequence WHSAGSYRTT…LAAVQMGLIY (128 aa). The Proton acceptor role is filled by H99. The segment at residues 225-251 is a cross-link (tryptophyl-tyrosyl-methioninium (Tyr-Met) (with W-98)); it reads YVNPEGVDGKSDPLRTAQDMRVTFSRM. H266 lines the heme b pocket.

The protein belongs to the peroxidase family. Peroxidase/catalase subfamily. As to quaternary structure, homodimer or homotetramer. Heme b is required as a cofactor. Formation of the three residue Trp-Tyr-Met cross-link is important for the catalase, but not the peroxidase activity of the enzyme.

The catalysed reaction is H2O2 + AH2 = A + 2 H2O. The enzyme catalyses 2 H2O2 = O2 + 2 H2O. Functionally, bifunctional enzyme with both catalase and broad-spectrum peroxidase activity. The sequence is that of Catalase-peroxidase from Pectobacterium atrosepticum (strain SCRI 1043 / ATCC BAA-672) (Erwinia carotovora subsp. atroseptica).